We begin with the raw amino-acid sequence, 375 residues long: MKLGVRLCVLVVFSLQLWGPGQGQELEPEQVLAFCDDKDVEAAVDLALVKYNQKLPYGNQLALYQILESSKAQNDSCTQYFVEFNSRVTDCPAGGDKVWRDCDYLPTGNKVPRPCKATVHMSETDKKVLAVFCDPVEAPVVAERTTCLGCPREIDVESEDLKDPLTYSITRFNADSDSSHHFILNSVGFATRQVVAGFRYRLMFDMRKSNCSKADHKELNDECHPDPDVELAHCNSTVDVAPWRHETAEANVECAPGPLDNFDVFRRRPPGWSPLRNFNNFAEVKTTQASTASAKEESSEESQERSPSAVTMANPEPALPSVAPTTAAESPFHCPSKPWKQFVPPTTLRPAQEKSPTPLPVVEEGLSDLDLLGKK.

The signal sequence occupies residues 1–23; it reads MKLGVRLCVLVVFSLQLWGPGQG. Cystatin kininogen-type domains are found at residues 35–139 and 156–260; these read CDDK…VEAP and VESE…GPLD. The N-linked (GlcNAc) asparagine glycan is linked to Asn-74. Disulfide bonds link Cys-91–Cys-102, Cys-115–Cys-133, Cys-211–Cys-223, and Cys-234–Cys-254. Asn-235 is a glycosylation site (N-linked (GlcNAc) asparagine). The interval 283 to 375 is disordered; it reads EVKTTQASTA…LSDLDLLGKK (93 aa).

In terms of processing, N-glycosylated, with sialylated biantennary complex-type glycans. Post-translationally, O-glycosylated, sialylated oligosaccharides. Bradykinin is released from kininogen by kallikrein. In terms of processing, the N-terminus is blocked. In terms of tissue distribution, expressed in the skin, liver, intestine, spleen, pancreas and kidney.

The protein localises to the cytoplasm. It localises to the vacuole. Functionally, inhibits papain and ficin (cysteine proteinases) but not trypsin (a serine proteinase). In Salmo salar (Atlantic salmon), this protein is Kininogen (LOC106584303).